A 234-amino-acid polypeptide reads, in one-letter code: Chromatin remodeling protein EBS (234 aa).

A BAH domain is found at 29-144 (KVVRAGDCVL…AATGAFTPDR (116 aa)). The PHD-type zinc-finger motif lies at 146 to 197 (AVYCKCEMPYNPDDLMVQCEGCKDWYHPACVGMTIEEAKKLDHFVCAECSSD).

It belongs to the SHL1/EBS protein family. In terms of assembly, recognizes di- and trimethylated histone H3 at lysine 4 (H3K4me2 and H3K4me3). Interacts with HDA6. Expressed ubiquitously, with higher levels in floral buds.

The protein localises to the nucleus. Chromatin remodeling factor that binds to methylated histone (e.g. H3K4me2/3) to prevent their acetylation (e.g. H3K9K14Ac), likely by recruiting histone deacetylase (HDAC) complexes, and thus regulating the transcription of target genes. Negative regulator in developmental processes in a gibberellic acid- (GA-) dependent manner, such as germination, flowering induction, and flower organ specification, probably by modulating developmental gene expression. Involved in the chromatin-mediated repression of floral initiation and controls genes regulating flowering. Negatively regulates the expression of the floral integrator FT epigenetically, by preventing high levels of H3 acetylation, thus maintaining an inactive chromatin conformation at FT locus. The sequence is that of Chromatin remodeling protein EBS from Arabidopsis thaliana (Mouse-ear cress).